The chain runs to 640 residues: Chaperone protein HtpG (640 aa).

Residues 1–343 (MQTAENVEHL…SNDLPLNVSR (343 aa)) form an a; substrate-binding region. Residues 344–564 (EILQESKDID…THDMSGNLGR (221 aa)) form a b region. Residues 565–640 (LLKSAGQKVP…LLLQNILSGK (76 aa)) form a c region.

This sequence belongs to the heat shock protein 90 family. As to quaternary structure, homodimer.

The protein localises to the cytoplasm. Functionally, molecular chaperone. Has ATPase activity. This chain is Chaperone protein HtpG, found in Nitrosomonas eutropha (strain DSM 101675 / C91 / Nm57).